The primary structure comprises 1028 residues: Serine/threonine-protein kinase fray2 (1028 aa).

Residues 1 to 67 (MSDDKYHHDK…PKPRKNYPNS (67 aa)) are disordered. Low complexity predominate over residues 20 to 54 (KQSTAAALSSSSTLASSSSMTTTTTTTSTTTTAAS). One can recognise a Protein kinase domain in the interval 71-330 (YELKETIGKG…PSKLLEHRFF (260 aa)). ATP contacts are provided by residues 77–85 (IGKGGSGLV) and Lys100. Asp195 serves as the catalytic Proton acceptor. Thr230 is subject to Phosphothreonine; by autocatalysis. Over residues 368-381 (TSSPQFDTGHSNSA) the composition is skewed to polar residues. Disordered stretches follow at residues 368–467 (TSSP…STVV), 486–561 (AYHQ…LQQP), and 580–914 (DLIT…IQSK). Low complexity-rich tracts occupy residues 387–419 (PNEN…NNNN) and 432–458 (TPSH…SNHT). Composition is skewed to polar residues over residues 503-518 (IPNH…SAHS) and 528-542 (IHPT…VVNN). Residues 543–561 (TQQPQTLQPPQQQHQLQQP) are compositionally biased toward low complexity. Positions 595–616 (IPSSSSHGNIPSLVTTSPKSPL) are enriched in polar residues. Composition is skewed to low complexity over residues 617 to 642 (QHQQ…ISSN) and 683 to 700 (SSRA…SHTS). 4 stretches are compositionally biased toward basic and acidic residues: residues 701–714 (SSDE…SDRK), 728–742 (SKRD…DRSN), 753–855 (VSRD…DRSR), and 865–893 (SRDS…DYKS).

This sequence belongs to the protein kinase superfamily. STE Ser/Thr protein kinase family. STE20 subfamily. It depends on Mn(2+) as a cofactor. In terms of processing, undergoes autophosphorylation in the catalytic domain.

The catalysed reaction is L-seryl-[protein] + ATP = O-phospho-L-seryl-[protein] + ADP + H(+). It catalyses the reaction L-threonyl-[protein] + ATP = O-phospho-L-threonyl-[protein] + ADP + H(+). The sequence is that of Serine/threonine-protein kinase fray2 from Dictyostelium discoideum (Social amoeba).